Consider the following 358-residue polypeptide: 3-isopropylmalate dehydrogenase (358 aa).

Positions 92, 102, 130, and 224 each coordinate substrate. The Mg(2+) site is built by D224, D248, and D252. G282–N294 contacts NAD(+).

Belongs to the isocitrate and isopropylmalate dehydrogenases family. LeuB type 1 subfamily. Homodimer. Mg(2+) is required as a cofactor. The cofactor is Mn(2+).

It localises to the cytoplasm. The enzyme catalyses (2R,3S)-3-isopropylmalate + NAD(+) = 4-methyl-2-oxopentanoate + CO2 + NADH. The protein operates within amino-acid biosynthesis; L-leucine biosynthesis; L-leucine from 3-methyl-2-oxobutanoate: step 3/4. Catalyzes the oxidation of 3-carboxy-2-hydroxy-4-methylpentanoate (3-isopropylmalate) to 3-carboxy-4-methyl-2-oxopentanoate. The product decarboxylates to 4-methyl-2 oxopentanoate. The sequence is that of 3-isopropylmalate dehydrogenase from Bordetella pertussis (strain Tohama I / ATCC BAA-589 / NCTC 13251).